The chain runs to 65 residues: Large ribosomal subunit protein bL32 (65 aa).

Over residues 1–19 (MAVQKSRKTPSKRGMRRSH) the composition is skewed to basic residues. The interval 1-32 (MAVQKSRKTPSKRGMRRSHNALTNPTLSEDQE) is disordered.

It belongs to the bacterial ribosomal protein bL32 family.

The sequence is that of Large ribosomal subunit protein bL32 from Ruthia magnifica subsp. Calyptogena magnifica.